A 276-amino-acid polypeptide reads, in one-letter code: MDLWTALQALILGVVEGLTEFLPISSTGHQIIVADLLDFGGERAMAFNIIIQLGAILAVVWEFRRKILDVVIGLPTQPSARRFTANLLIAFLPAVVLGVIFADLIHHYLFNPITVAAALVVGGIVMLWAEQRQHEVHAETVDEIRWTDALKIGFAQCLAMIPGTSRSGSTIIGGLLFGLSRKTATEFSFFLAMPTMVGAAVYSGYKYRDLFVPADFPVFAIGFVTAFIFAMIAVRGLLKFIGSHSYAAFAWYRIVFGLVILATWQFGWVDWTAAQP.

6 consecutive transmembrane segments (helical) span residues 43-63 (RAMA…VWEF), 85-105 (ANLL…ADLI), 109-129 (LFNP…MLWA), 184-204 (ATEF…VYSG), 214-234 (ADFP…MIAV), and 254-274 (IVFG…WTAA).

This sequence belongs to the UppP family.

Its subcellular location is the cell inner membrane. The enzyme catalyses di-trans,octa-cis-undecaprenyl diphosphate + H2O = di-trans,octa-cis-undecaprenyl phosphate + phosphate + H(+). Functionally, catalyzes the dephosphorylation of undecaprenyl diphosphate (UPP). Confers resistance to bacitracin. This Pseudomonas fluorescens (strain Pf0-1) protein is Undecaprenyl-diphosphatase 1.